Reading from the N-terminus, the 304-residue chain is Cytochrome c biogenesis protein CcsA (304 aa).

8 helical membrane-spanning segments follow: residues 11-31, 37-57, 63-83, 96-116, 141-161, 212-232, 246-263, and 275-295; these read SLGFAGFVLLLLAMPLAFWAV, AGLVRLLVAVANLLFTAQLIL, GHFPISNLYESLCFLAWACTL, IVAAAATPMGLGCIAFASFAL, VIMVSYAALLVGSLLSLAVLV, TITVGFLMLTVGIVSGAVWAN, TWALICWLVYAAYLHTRL, and VAVVGLVVIAVCYIGVNLLGI.

The protein belongs to the CcmF/CycK/Ccl1/NrfE/CcsA family. May interact with ccs1.

Its subcellular location is the cellular thylakoid membrane. Its function is as follows. Required during biogenesis of c-type cytochromes (cytochrome c6 and cytochrome f) at the step of heme attachment. The protein is Cytochrome c biogenesis protein CcsA of Synechococcus sp. (strain CC9605).